The chain runs to 744 residues: Glucosamine inositolphosphorylceramide transferase 1 (744 aa).

The next 3 helical transmembrane spans lie at 31-51 (FLVA…WLVV), 378-398 (SLFG…VGFV), and 460-480 (LFFC…VHFL). Substrate-binding positions include N534, 558–563 (NSLNNR), 579–581 (DDD), R609, and 665–669 (FNCED). A Mn(2+)-binding site is contributed by D581. The cysteines at positions 667 and 718 are disulfide-linked. D669 is an active-site residue.

It belongs to the glycosyltransferase 64 family. The cofactor is Mn(2+).

It localises to the membrane. It functions in the pathway sphingolipid metabolism. Essential protein. Glycosyltransferase that mediates the glycosylation of glycosylinositol phosphorylceramides (GIPCs), the major sphingolipids in the plasma membrane; acts as a HexN(Ac)-specific GIPC sugar transferase. Responsible for the glycosylation of a subgroup of GIPCs found in seeds and pollen that contain GlcNAc and GlcN (GlcN(Ac)). Maybe involved in the maintenance of cell-cell adhesion. The protein is Glucosamine inositolphosphorylceramide transferase 1 of Oryza sativa subsp. indica (Rice).